Reading from the N-terminus, the 407-residue chain is Cysteine desulfurase (407 aa).

Lys226 carries the post-translational modification N6-(pyridoxal phosphate)lysine. Cys364 serves as the catalytic Cysteine persulfide intermediate.

It belongs to the class-V pyridoxal-phosphate-dependent aminotransferase family. Csd subfamily. Homodimer. Interacts with SufE and the SufBCD complex composed of SufB, SufC and SufD. The interaction with SufE is required to mediate the direct transfer of the sulfur atom from the S-sulfanylcysteine. Pyridoxal 5'-phosphate is required as a cofactor.

The protein resides in the cytoplasm. It catalyses the reaction (sulfur carrier)-H + L-cysteine = (sulfur carrier)-SH + L-alanine. The enzyme catalyses L-selenocysteine + AH2 = hydrogenselenide + L-alanine + A + H(+). The protein operates within cofactor biosynthesis; iron-sulfur cluster biosynthesis. In terms of biological role, cysteine desulfurases mobilize the sulfur from L-cysteine to yield L-alanine, an essential step in sulfur metabolism for biosynthesis of a variety of sulfur-containing biomolecules. Component of the suf operon, which is activated and required under specific conditions such as oxidative stress and iron limitation. Acts as a potent selenocysteine lyase in vitro, that mobilizes selenium from L-selenocysteine. Selenocysteine lyase activity is however unsure in vivo. The polypeptide is Cysteine desulfurase (Pectobacterium atrosepticum (strain SCRI 1043 / ATCC BAA-672) (Erwinia carotovora subsp. atroseptica)).